A 750-amino-acid chain; its full sequence is Dual specificity tyrosine-phosphorylation-regulated kinase 1A (750 aa).

Disordered regions lie at residues Ala-56–Ala-81 and Tyr-104–Asn-129. The Bipartite nuclear localization signal signature appears at Arg-109–Lys-126. Positions Tyr-151–Phe-471 constitute a Protein kinase domain. ATP is bound by residues Ile-157–Val-165, Lys-180, and Phe-230–Leu-233. The Proton acceptor role is filled by Asp-279. 4 disordered regions span residues Thr-400–Ser-434, Glu-477–Gly-531, Ser-583–Ala-666, and Asp-731–Ser-750. The span at Glu-477–Gln-493 shows a compositional bias: polar residues. The span at Ser-494–Gly-517 shows a compositional bias: low complexity. Positions Gln-584–Ser-612 are histidine-rich domain (HRD). The span at Val-587–Gln-608 shows a compositional bias: basic residues. Residues Ile-610–Asn-621 show a composition bias toward polar residues. The span at Ser-622–Thr-659 shows a compositional bias: low complexity. Residues Cys-741 to Ser-750 are compositionally biased toward polar residues.

Belongs to the protein kinase superfamily. CMGC Ser/Thr protein kinase family. MNB/DYRK subfamily. Autophosphorylated on tyrosine residues.

The protein localises to the nucleus. Its subcellular location is the nucleus speckle. It catalyses the reaction L-seryl-[protein] + ATP = O-phospho-L-seryl-[protein] + ADP + H(+). It carries out the reaction L-threonyl-[protein] + ATP = O-phospho-L-threonyl-[protein] + ADP + H(+). The catalysed reaction is L-tyrosyl-[protein] + ATP = O-phospho-L-tyrosyl-[protein] + ADP + H(+). The enzyme catalyses [DNA-directed RNA polymerase] + ATP = phospho-[DNA-directed RNA polymerase] + ADP + H(+). In terms of biological role, dual-specificity kinase which possesses both serine/threonine and tyrosine kinase activities. Exhibits a substrate preference for proline at position P+1 and arginine at position P-3. Plays an important role in double-strand breaks (DSBs) repair following DNA damage. Mechanistically, phosphorylates RNF169 and increases its ability to block accumulation of TP53BP1 at the DSB sites thereby promoting homologous recombination repair (HRR). Also acts as a positive regulator of transcription by acting as a CTD kinase that mediates phosphorylation of the CTD (C-terminal domain) of the large subunit of RNA polymerase II (RNAP II) POLR2A. Modulates alternative splicing by phosphorylating the splice factor SRSF6. Phosphorylates SEPTIN4, SEPTIN5 and SF3B1. This Xenopus laevis (African clawed frog) protein is Dual specificity tyrosine-phosphorylation-regulated kinase 1A.